Reading from the N-terminus, the 185-residue chain is ATP synthase subunit b, chloroplastic (185 aa).

Residues 27-49 (LATNPINLSVVLGVLVFFGKGVL) traverse the membrane as a helical segment.

This sequence belongs to the ATPase B chain family. As to quaternary structure, F-type ATPases have 2 components, F(1) - the catalytic core - and F(0) - the membrane proton channel. F(1) has five subunits: alpha(3), beta(3), gamma(1), delta(1), epsilon(1). F(0) has four main subunits: a(1), b(1), b'(1) and c(10-14). The alpha and beta chains form an alternating ring which encloses part of the gamma chain. F(1) is attached to F(0) by a central stalk formed by the gamma and epsilon chains, while a peripheral stalk is formed by the delta, b and b' chains.

Its subcellular location is the plastid. It is found in the chloroplast thylakoid membrane. In terms of biological role, f(1)F(0) ATP synthase produces ATP from ADP in the presence of a proton or sodium gradient. F-type ATPases consist of two structural domains, F(1) containing the extramembraneous catalytic core and F(0) containing the membrane proton channel, linked together by a central stalk and a peripheral stalk. During catalysis, ATP synthesis in the catalytic domain of F(1) is coupled via a rotary mechanism of the central stalk subunits to proton translocation. Its function is as follows. Component of the F(0) channel, it forms part of the peripheral stalk, linking F(1) to F(0). This Glycine max (Soybean) protein is ATP synthase subunit b, chloroplastic.